The following is a 76-amino-acid chain: Sulfur carrier protein TusA (76 aa).

The active-site Cysteine persulfide intermediate is the Cys14.

Belongs to the sulfur carrier protein TusA family. As to quaternary structure, interacts with IscS.

The protein resides in the cytoplasm. It functions in the pathway tRNA modification. Functionally, sulfur carrier protein involved in sulfur trafficking in the cell. Part of a sulfur-relay system required for 2-thiolation during synthesis of 2-thiouridine of the modified wobble base 5-methylaminomethyl-2-thiouridine (mnm(5)s(2)U) in tRNA. Interacts with IscS and stimulates its cysteine desulfurase activity. Accepts an activated sulfur from IscS, which is then transferred to TusD, and thus determines the direction of sulfur flow from IscS to 2-thiouridine formation. Also appears to be involved in sulfur transfer for the biosynthesis of molybdopterin. The chain is Sulfur carrier protein TusA from Buchnera aphidicola subsp. Acyrthosiphon pisum (strain Tuc7).